A 988-amino-acid polypeptide reads, in one-letter code: DExH-box ATP-dependent RNA helicase DExH9 (988 aa).

The segment at 1 to 27 is disordered; sequence MGSVKRKSVEESSDSAPPQKVQREDDS. In terms of domain architecture, Helicase ATP-binding spans 76–232; the sequence is IKCLDNGESV…WVAKVHQQPC (157 aa). 89–96 lines the ATP pocket; that stretch reads AHTSAGKT. The DEVH box motif lies at 180–183; sequence DEVH. The 203-residue stretch at 307-509 folds into the Helicase C-terminal domain; it reads DIFKLVKMII…SYNMLLNQLR (203 aa).

Belongs to the DExH box helicase family. SKI2 subfamily. As to expression, ubiquitous but preferentially expressed in active tissues.

It is found in the nucleus. The protein resides in the nucleolus. The enzyme catalyses ATP + H2O = ADP + phosphate + H(+). Its function is as follows. ATP-dependent RNA helicase that associates with the RNA exosome complex. Required for proper rRNA biogenesis and development. Involved in the 3'-processing of the 7S pre-RNA to the mature 5.8S rRNA and also in the removal of rRNA maturation by-products. The chain is DExH-box ATP-dependent RNA helicase DExH9 from Arabidopsis thaliana (Mouse-ear cress).